Here is a 186-residue protein sequence, read N- to C-terminus: UPF0301 protein CGSHiEE_01530 (186 aa).

Belongs to the UPF0301 (AlgH) family.

The protein is UPF0301 protein CGSHiEE_01530 of Haemophilus influenzae (strain PittEE).